The sequence spans 194 residues: Ribonuclease HII (194 aa).

The RNase H type-2 domain maps to 16–194 (CIVAGIDEAG…PYHRRSFRCC (179 aa)). The a divalent metal cation site is built by Asp-22, Glu-23, and Asp-113.

This sequence belongs to the RNase HII family. Mn(2+) serves as cofactor. Mg(2+) is required as a cofactor.

Its subcellular location is the cytoplasm. The enzyme catalyses Endonucleolytic cleavage to 5'-phosphomonoester.. Functionally, endonuclease that specifically degrades the RNA of RNA-DNA hybrids. The sequence is that of Ribonuclease HII from Rickettsia massiliae (strain Mtu5).